The primary structure comprises 310 residues: Aspartate carbamoyltransferase catalytic subunit (310 aa).

Positions 55 and 56 each coordinate carbamoyl phosphate. Lys-83 is a binding site for L-aspartate. Positions 105, 133, and 136 each coordinate carbamoyl phosphate. Residues Arg-166 and Arg-220 each contribute to the L-aspartate site. 2 residues coordinate carbamoyl phosphate: Gly-261 and Pro-262.

The protein belongs to the aspartate/ornithine carbamoyltransferase superfamily. ATCase family. As to quaternary structure, heterododecamer (2C3:3R2) of six catalytic PyrB chains organized as two trimers (C3), and six regulatory PyrI chains organized as three dimers (R2).

The enzyme catalyses carbamoyl phosphate + L-aspartate = N-carbamoyl-L-aspartate + phosphate + H(+). It functions in the pathway pyrimidine metabolism; UMP biosynthesis via de novo pathway; (S)-dihydroorotate from bicarbonate: step 2/3. In terms of biological role, catalyzes the condensation of carbamoyl phosphate and aspartate to form carbamoyl aspartate and inorganic phosphate, the committed step in the de novo pyrimidine nucleotide biosynthesis pathway. This Chlorobium phaeovibrioides (strain DSM 265 / 1930) (Prosthecochloris vibrioformis (strain DSM 265)) protein is Aspartate carbamoyltransferase catalytic subunit.